A 320-amino-acid chain; its full sequence is Cytochrome f (320 aa).

The first 35 residues, 1 to 35 (MENRNTFSWVKEQITRSISVSIMIYVITRTSISNA), serve as a signal peptide directing secretion. Residues tyrosine 36, cysteine 56, cysteine 59, and histidine 60 each coordinate heme. Residues 286–306 (VQGLLFFFASVILAQVFLVLK) form a helical membrane-spanning segment.

This sequence belongs to the cytochrome f family. In terms of assembly, the 4 large subunits of the cytochrome b6-f complex are cytochrome b6, subunit IV (17 kDa polypeptide, petD), cytochrome f and the Rieske protein, while the 4 small subunits are PetG, PetL, PetM and PetN. The complex functions as a dimer. Requires heme as cofactor.

Its subcellular location is the plastid. It is found in the chloroplast thylakoid membrane. Its function is as follows. Component of the cytochrome b6-f complex, which mediates electron transfer between photosystem II (PSII) and photosystem I (PSI), cyclic electron flow around PSI, and state transitions. This chain is Cytochrome f, found in Hordeum vulgare (Barley).